Consider the following 98-residue polypeptide: Cell division protein FtsB (98 aa).

The Cytoplasmic segment spans residues 1–3; it reads MKR. Residues 4-21 traverse the membrane as a helical segment; the sequence is LLIVLIALLAMLEYRLWF. Topologically, residues 22–98 are periplasmic; sequence GDKSLAESFH…GGERDKPSND (77 aa). A coiled-coil region spans residues 31 to 74; that stretch reads HLQEQIKLQQQSNAQLVARNQILREEISDLRSGTEALEERARNE.

This sequence belongs to the FtsB family. In terms of assembly, part of a complex composed of FtsB, FtsL and FtsQ.

Its subcellular location is the cell inner membrane. Its function is as follows. Essential cell division protein. May link together the upstream cell division proteins, which are predominantly cytoplasmic, with the downstream cell division proteins, which are predominantly periplasmic. This is Cell division protein FtsB from Shewanella halifaxensis (strain HAW-EB4).